Consider the following 201-residue polypeptide: 3-isopropylmalate dehydratase small subunit (201 aa).

The protein belongs to the LeuD family. LeuD type 1 subfamily. As to quaternary structure, heterodimer of LeuC and LeuD.

It carries out the reaction (2R,3S)-3-isopropylmalate = (2S)-2-isopropylmalate. It functions in the pathway amino-acid biosynthesis; L-leucine biosynthesis; L-leucine from 3-methyl-2-oxobutanoate: step 2/4. In terms of biological role, catalyzes the isomerization between 2-isopropylmalate and 3-isopropylmalate, via the formation of 2-isopropylmaleate. This is 3-isopropylmalate dehydratase small subunit from Methylorubrum extorquens (strain CM4 / NCIMB 13688) (Methylobacterium extorquens).